A 352-amino-acid polypeptide reads, in one-letter code: Protein Wnt-4a (352 aa).

A signal peptide spans 1 to 22 (MSSEYLIRSLLMLFLALFSANA). Disulfide bonds link C78-C89, C128-C136, C138-C155, C206-C220, C208-C215, C280-C312, C297-C307, C311-C351, C327-C342, C329-C339, and C334-C335. An N-linked (GlcNAc...) asparagine glycan is attached at N88. S212 carries the O-palmitoleoyl serine; by PORCN lipid modification. N298 carries N-linked (GlcNAc...) asparagine glycosylation.

Belongs to the Wnt family. Palmitoleoylation is required for efficient binding to frizzled receptors. Depalmitoleoylation leads to Wnt signaling pathway inhibition. Caudal forebrain and neural keel, the floor plate, the gill slit and the developing pronephros.

It is found in the secreted. The protein localises to the extracellular space. It localises to the extracellular matrix. Its function is as follows. Ligand for members of the frizzled family of seven transmembrane receptors. Plays an important role in embryonic development. This chain is Protein Wnt-4a (wnt4a), found in Danio rerio (Zebrafish).